The sequence spans 72 residues: MSRLLLLCSSLLRHRAVLFSKPGHPGRLSHSESPQKKILSPTESAVGIVVFFTTFYIPAAYVLSSLKYFKGE.

The N-terminal 29 residues, 1-29, are a transit peptide targeting the mitochondrion; that stretch reads MSRLLLLCSSLLRHRAVLFSKPGHPGRLS. The Mitochondrial matrix segment spans residues 30–40; it reads HSESPQKKILS. Residues 41–64 form a helical membrane-spanning segment; it reads PTESAVGIVVFFTTFYIPAAYVLS. Residues 65 to 72 are Mitochondrial intermembrane-facing; that stretch reads SLKYFKGE.

It belongs to the cytochrome c oxidase VIII family. As to quaternary structure, component of the cytochrome c oxidase (complex IV, CIV), a multisubunit enzyme composed of 14 subunits. The complex is composed of a catalytic core of 3 subunits MT-CO1, MT-CO2 and MT-CO3, encoded in the mitochondrial DNA, and 11 supernumerary subunits COX4I, COX5A, COX5B, COX6A, COX6B, COX6C, COX7A, COX7B, COX7C, COX8 and NDUFA4, which are encoded in the nuclear genome. The complex exists as a monomer or a dimer and forms supercomplexes (SCs) in the inner mitochondrial membrane with NADH-ubiquinone oxidoreductase (complex I, CI) and ubiquinol-cytochrome c oxidoreductase (cytochrome b-c1 complex, complex III, CIII), resulting in different assemblies (supercomplex SCI(1)III(2)IV(1) and megacomplex MCI(2)III(2)IV(2)).

It localises to the mitochondrion inner membrane. It participates in energy metabolism; oxidative phosphorylation. In terms of biological role, component of the cytochrome c oxidase, the last enzyme in the mitochondrial electron transport chain which drives oxidative phosphorylation. The respiratory chain contains 3 multisubunit complexes succinate dehydrogenase (complex II, CII), ubiquinol-cytochrome c oxidoreductase (cytochrome b-c1 complex, complex III, CIII) and cytochrome c oxidase (complex IV, CIV), that cooperate to transfer electrons derived from NADH and succinate to molecular oxygen, creating an electrochemical gradient over the inner membrane that drives transmembrane transport and the ATP synthase. Cytochrome c oxidase is the component of the respiratory chain that catalyzes the reduction of oxygen to water. Electrons originating from reduced cytochrome c in the intermembrane space (IMS) are transferred via the dinuclear copper A center (CU(A)) of subunit 2 and heme A of subunit 1 to the active site in subunit 1, a binuclear center (BNC) formed by heme A3 and copper B (CU(B)). The BNC reduces molecular oxygen to 2 water molecules using 4 electrons from cytochrome c in the IMS and 4 protons from the mitochondrial matrix. The sequence is that of Cytochrome c oxidase subunit 8C, mitochondrial (Cox8c) from Mus musculus (Mouse).